Consider the following 242-residue polypeptide: Acetoacetyl-CoA reductase (242 aa).

Residues 12–14 (RGI) and 82–86 (NAGIT) each bind NADP(+). Substrate contacts are provided by residues Asp-88 and 141-144 (QAGQ). The active-site Proton acceptor is the Tyr-147. 177–180 (PGYI) serves as a coordination point for NADP(+). Residue 178–179 (GY) participates in substrate binding.

This sequence belongs to the short-chain dehydrogenases/reductases (SDR) family.

It localises to the cytoplasm. It catalyses the reaction a (3R)-3-hydroxyacyl-CoA + NADP(+) = a 3-oxoacyl-CoA + NADPH + H(+). It functions in the pathway biopolymer metabolism; poly-(R)-3-hydroxybutanoate biosynthesis. This chain is Acetoacetyl-CoA reductase (phaB), found in Paracoccus denitrificans.